Here is a 65-residue protein sequence, read N- to C-terminus: Large ribosomal subunit protein bL35 (65 aa).

The protein belongs to the bacterial ribosomal protein bL35 family.

This chain is Large ribosomal subunit protein bL35, found in Thermus thermophilus (strain ATCC BAA-163 / DSM 7039 / HB27).